A 439-amino-acid polypeptide reads, in one-letter code: Adenylosuccinate synthetase (439 aa).

GTP-binding positions include 14–20 (GDEGKGK) and 42–44 (GHT). The active-site Proton acceptor is the D15. Positions 15 and 42 each coordinate Mg(2+). Residues 15–18 (DEGK), 40–43 (NAGH), T130, R144, Q225, T240, and R304 contribute to the IMP site. H43 serves as the catalytic Proton donor. Substrate is bound at residue 300–306 (TTTGRRR). GTP contacts are provided by residues R306, 332 to 334 (KLD), and 414 to 416 (SLG).

It belongs to the adenylosuccinate synthetase family. In terms of assembly, homodimer. Mg(2+) is required as a cofactor.

Its subcellular location is the cytoplasm. The catalysed reaction is IMP + L-aspartate + GTP = N(6)-(1,2-dicarboxyethyl)-AMP + GDP + phosphate + 2 H(+). Its pathway is purine metabolism; AMP biosynthesis via de novo pathway; AMP from IMP: step 1/2. In terms of biological role, plays an important role in the de novo pathway of purine nucleotide biosynthesis. Catalyzes the first committed step in the biosynthesis of AMP from IMP. The sequence is that of Adenylosuccinate synthetase from Prochlorococcus marinus (strain MIT 9303).